The primary structure comprises 299 residues: Ubiquinol-cytochrome c reductase complex assembly factor 1 (299 aa).

This sequence belongs to the CBP3 family. In terms of assembly, interacts with UQCC2. Interacts with UQCC3. Forms a complex, named COMB/coordinator of mitochondrial CYTB biogenesis, composed of UQCC1, UQCC2, UQCC4, UQCC5 and UQCC6; stabilizes nascent cytochrome b/MT-CYB and promotes its membrane insertion. Forms a complex, named COMB/coordinator of mitochondrial CYTB biogenesis, composed of UQCC1, UQCC2, UQCC4, UQCC5 and UQCC6; stabilizes nascent cytochrome b/MT-CYB and promotes its membrane insertion. Forms a complex, named COMA, composed of UQCC1, UQCC2 and UQCC4; activates MT-CYB translation. Forms a complex, named COMC, composed of UQCC1, UQCC2; UQCC3 and UQCC4; mediates MT-CYB hemylation and association with the first nuclear-encoded CIII subunit UQCRQ.

The protein localises to the mitochondrion inner membrane. It localises to the cytoplasmic vesicle. Its function is as follows. Required for the assembly of the ubiquinol-cytochrome c reductase complex (mitochondrial respiratory chain complex III or cytochrome b-c1 complex). Involved in cytochrome b translation and/or stability. The polypeptide is Ubiquinol-cytochrome c reductase complex assembly factor 1 (UQCC1) (Homo sapiens (Human)).